The following is a 1430-amino-acid chain: Gag-Pol polyprotein (1430 aa).

A lipid anchor (N-myristoyl glycine; by host) is attached at Gly-2. The interaction with Gp41 stretch occupies residues 7-31; that stretch reads ILSGGKLDEWEKIQLRPGGKKRYKM. The interaction with host CALM1 stretch occupies residues 8 to 43; that stretch reads LSGGKLDEWEKIQLRPGGKKRYKMKHLIWASRELER. The segment at 12–19 is interaction with host AP3D1; the sequence is KLDEWEKI. Positions 14–33 are interaction with membrane phosphatidylinositol 4,5-bisphosphate and RNA; that stretch reads DEWEKIQLRPGGKKRYKMKH. The Nuclear export signal motif lies at 16–22; that stretch reads WEKIQLR. Residues 26–32 carry the Nuclear localization signal motif; sequence KKRYKMK. The interaction with membrane phosphatidylinositol 4,5-bisphosphate stretch occupies residues 73-77; it reads EELKS. Tyr-128 is subject to Phosphotyrosine; by host. Residues 185-223 are interaction with human PPIA/CYPA and NUP153; the sequence is NTVGGHQAAMQMLKDTINEEAAEWDRLHPVHAGPAPPGQ. The tract at residues 273 to 359 is dimerization/Multimerization of capsid protein p24; it reads YSPVSILDIK…GGPSHKARVL (87 aa). CCHC-type zinc fingers lie at residues 384–401 and 405–422; these read VKCF…NCRA and KGCW…DCTE. The tract at residues 438-475 is disordered; it reads EARKFPSEQTRANSPTSRELRVQRGDNPLSEAGAERRG. Residues 444 to 454 are compositionally biased toward polar residues; the sequence is SEQTRANSPTS. The dimerization of protease stretch occupies residues 483 to 487; that stretch reads PQITL. Residues 502–571 enclose the Peptidase A2 domain; the sequence is KEALLDTGAD…TPVNIIGRNM (70 aa). Residue Asp-507 is the For protease activity; shared with dimeric partner of the active site. Dimerization of protease stretches follow at residues 531–537 and 570–582; these read GIGGFIK and NMLT…LNFP. The Reverse transcriptase domain maps to 625–815; the sequence is EGKISKIGPE…PPFLWMGHEL (191 aa). Asp-691, Asp-766, and Asp-767 together coordinate Mg(2+). The interval 808–816 is RT 'primer grip'; the sequence is FLWMGHELH. Positions 980–996 match the Tryptophan repeat motif motif; sequence WDTWWTDYWQATWIPEW. In terms of domain architecture, RNase H type-1 spans 1016-1139; that stretch reads IAGADTFYVD…VDKLVSAGVR (124 aa). Mg(2+) contacts are provided by Asp-1025, Glu-1060, Asp-1080, and Asp-1131. The segment at 1145–1186 adopts an Integrase-type zinc-finger fold; that stretch reads DGIDKAQEEHEKYHNNWRAMASDFNLPPIVAKEIVASCDKCQ. His-1154, His-1158, Cys-1182, and Cys-1185 together coordinate Zn(2+). In terms of domain architecture, Integrase catalytic spans 1196 to 1346; it reads VDCSPGIWQL…SAGERIIDII (151 aa). 3 residues coordinate Mg(2+): Asp-1206, Asp-1258, and Glu-1294. Positions 1365 to 1412 form a DNA-binding region, integrase-type; the sequence is FRVYYRDSRNPVWKGPAKLLWKGEGAVVIQDNSEIKIVPRRKAKIIRD.

Homotrimer; further assembles as hexamers of trimers. Interacts with gp41 (via C-terminus). Interacts with host CALM1; this interaction induces a conformational change in the Matrix protein, triggering exposure of the myristate group. Interacts with host AP3D1; this interaction allows the polyprotein trafficking to multivesicular bodies during virus assembly. Part of the pre-integration complex (PIC) which is composed of viral genome, matrix protein, Vpr and integrase. As to quaternary structure, homodimer; the homodimer further multimerizes as homohexamers or homopentamers. Interacts with human PPIA/CYPA; This interaction stabilizes the capsid. Interacts with human NUP153. Interacts with host PDZD8; this interaction stabilizes the capsid. Interacts with monkey TRIM5; this interaction destabilizes the capsid. In terms of assembly, homodimer, whose active site consists of two apposed aspartic acid residues. Heterodimer of p66 RT and p51 RT (RT p66/p51). Heterodimerization of RT is essential for DNA polymerase activity. The overall folding of the subdomains is similar in p66 RT and p51 RT but the spatial arrangements of the subdomains are dramatically different. As to quaternary structure, homotetramer; may further associate as a homohexadecamer. Part of the pre-integration complex (PIC) which is composed of viral genome, matrix protein, Vpr and integrase. Interacts with human SMARCB1/INI1 and human PSIP1/LEDGF isoform 1. Interacts with human KPNA3; this interaction might play a role in nuclear import of the pre-integration complex. Interacts with human NUP153; this interaction might play a role in nuclear import of the pre-integration complex. Requires Mg(2+) as cofactor. Specific enzymatic cleavages by the viral protease yield mature proteins. The protease is released by autocatalytic cleavage. The polyprotein is cleaved during and after budding, this process is termed maturation. Proteolytic cleavage of p66 RT removes the RNase H domain to yield the p51 RT subunit. Nucleocapsid protein p7 might be further cleaved after virus entry. Post-translationally, tyrosine phosphorylated presumably in the virion by a host kinase. Phosphorylation is apparently not a major regulator of membrane association. In terms of processing, phosphorylated possibly by host MAPK1; this phosphorylation is necessary for Pin1-mediated virion uncoating. Methylated by host PRMT6, impairing its function by reducing RNA annealing and the initiation of reverse transcription.

The protein localises to the host cell membrane. It localises to the host endosome. Its subcellular location is the host multivesicular body. The protein resides in the virion membrane. It is found in the host nucleus. The protein localises to the host cytoplasm. It localises to the virion. The catalysed reaction is Specific for a P1 residue that is hydrophobic, and P1' variable, but often Pro.. It catalyses the reaction Endohydrolysis of RNA in RNA/DNA hybrids. Three different cleavage modes: 1. sequence-specific internal cleavage of RNA. Human immunodeficiency virus type 1 and Moloney murine leukemia virus enzymes prefer to cleave the RNA strand one nucleotide away from the RNA-DNA junction. 2. RNA 5'-end directed cleavage 13-19 nucleotides from the RNA end. 3. DNA 3'-end directed cleavage 15-20 nucleotides away from the primer terminus.. It carries out the reaction 3'-end directed exonucleolytic cleavage of viral RNA-DNA hybrid.. The enzyme catalyses DNA(n) + a 2'-deoxyribonucleoside 5'-triphosphate = DNA(n+1) + diphosphate. Its activity is regulated as follows. Protease: The viral protease is inhibited by many synthetic protease inhibitors (PIs), such as amprenavir, atazanavir, indinavir, loprinavir, nelfinavir, ritonavir and saquinavir. Use of protease inhibitors in tritherapy regimens permit more ambitious therapeutic strategies. Reverse transcriptase/ribonuclease H: RT can be inhibited either by nucleoside RT inhibitors (NRTIs) or by non nucleoside RT inhibitors (NNRTIs). NRTIs act as chain terminators, whereas NNRTIs inhibit DNA polymerization by binding a small hydrophobic pocket near the RT active site and inducing an allosteric change in this region. Classical NRTIs are abacavir, adefovir (PMEA), didanosine (ddI), lamivudine (3TC), stavudine (d4T), tenofovir (PMPA), zalcitabine (ddC), and zidovudine (AZT). Classical NNRTIs are atevirdine (BHAP U-87201E), delavirdine, efavirenz (DMP-266), emivirine (I-EBU), and nevirapine (BI-RG-587). The tritherapies used as a basic effective treatment of AIDS associate two NRTIs and one NNRTI. Its function is as follows. Mediates, with Gag polyprotein, the essential events in virion assembly, including binding the plasma membrane, making the protein-protein interactions necessary to create spherical particles, recruiting the viral Env proteins, and packaging the genomic RNA via direct interactions with the RNA packaging sequence (Psi). Gag-Pol polyprotein may regulate its own translation, by the binding genomic RNA in the 5'-UTR. At low concentration, the polyprotein would promote translation, whereas at high concentration, the polyprotein would encapsidate genomic RNA and then shut off translation. Targets the polyprotein to the plasma membrane via a multipartite membrane-binding signal, that includes its myristoylated N-terminus. Matrix protein is part of the pre-integration complex. Implicated in the release from host cell mediated by Vpu. Binds to RNA. In terms of biological role, forms the conical core that encapsulates the genomic RNA-nucleocapsid complex in the virion. Most core are conical, with only 7% tubular. The core is constituted by capsid protein hexamer subunits. The core is disassembled soon after virion entry. Host restriction factors such as TRIM5-alpha or TRIMCyp bind retroviral capsids and cause premature capsid disassembly, leading to blocks in reverse transcription. Capsid restriction by TRIM5 is one of the factors which restricts HIV-1 to the human species. Host PIN1 apparently facilitates the virion uncoating. On the other hand, interactions with PDZD8 or CYPA stabilize the capsid. Functionally, encapsulates and protects viral dimeric unspliced genomic RNA (gRNA). Binds these RNAs through its zinc fingers. Acts as a nucleic acid chaperone which is involved in rearangement of nucleic acid secondary structure during gRNA retrotranscription. Also facilitates template switch leading to recombination. As part of the polyprotein, participates in gRNA dimerization, packaging, tRNA incorporation and virion assembly. Its function is as follows. Aspartyl protease that mediates proteolytic cleavages of Gag and Gag-Pol polyproteins during or shortly after the release of the virion from the plasma membrane. Cleavages take place as an ordered, step-wise cascade to yield mature proteins. This process is called maturation. Displays maximal activity during the budding process just prior to particle release from the cell. Also cleaves Nef and Vif, probably concomitantly with viral structural proteins on maturation of virus particles. Hydrolyzes host EIF4GI and PABP1 in order to shut off the capped cellular mRNA translation. The resulting inhibition of cellular protein synthesis serves to ensure maximal viral gene expression and to evade host immune response. Also mediates cleavage of host YTHDF3. Mediates cleavage of host CARD8, thereby activating the CARD8 inflammasome, leading to the clearance of latent HIV-1 in patient CD4(+) T-cells after viral reactivation; in contrast, HIV-1 can evade CARD8-sensing when its protease remains inactive in infected cells prior to viral budding. Multifunctional enzyme that converts the viral RNA genome into dsDNA in the cytoplasm, shortly after virus entry into the cell. This enzyme displays a DNA polymerase activity that can copy either DNA or RNA templates, and a ribonuclease H (RNase H) activity that cleaves the RNA strand of RNA-DNA heteroduplexes in a partially processive 3' to 5' endonucleasic mode. Conversion of viral genomic RNA into dsDNA requires many steps. A tRNA(3)-Lys binds to the primer-binding site (PBS) situated at the 5'-end of the viral RNA. RT uses the 3' end of the tRNA primer to perform a short round of RNA-dependent minus-strand DNA synthesis. The reading proceeds through the U5 region and ends after the repeated (R) region which is present at both ends of viral RNA. The portion of the RNA-DNA heteroduplex is digested by the RNase H, resulting in a ssDNA product attached to the tRNA primer. This ssDNA/tRNA hybridizes with the identical R region situated at the 3' end of viral RNA. This template exchange, known as minus-strand DNA strong stop transfer, can be either intra- or intermolecular. RT uses the 3' end of this newly synthesized short ssDNA to perform the RNA-dependent minus-strand DNA synthesis of the whole template. RNase H digests the RNA template except for two polypurine tracts (PPTs) situated at the 5'-end and near the center of the genome. It is not clear if both polymerase and RNase H activities are simultaneous. RNase H probably can proceed both in a polymerase-dependent (RNA cut into small fragments by the same RT performing DNA synthesis) and a polymerase-independent mode (cleavage of remaining RNA fragments by free RTs). Secondly, RT performs DNA-directed plus-strand DNA synthesis using the PPTs that have not been removed by RNase H as primers. PPTs and tRNA primers are then removed by RNase H. The 3' and 5' ssDNA PBS regions hybridize to form a circular dsDNA intermediate. Strand displacement synthesis by RT to the PBS and PPT ends produces a blunt ended, linear dsDNA copy of the viral genome that includes long terminal repeats (LTRs) at both ends. In terms of biological role, catalyzes viral DNA integration into the host chromosome, by performing a series of DNA cutting and joining reactions. This enzyme activity takes place after virion entry into a cell and reverse transcription of the RNA genome in dsDNA. The first step in the integration process is 3' processing. This step requires a complex comprising the viral genome, matrix protein, Vpr and integrase. This complex is called the pre-integration complex (PIC). The integrase protein removes 2 nucleotides from each 3' end of the viral DNA, leaving recessed CA OH's at the 3' ends. In the second step, the PIC enters cell nucleus. This process is mediated through integrase and Vpr proteins, and allows the virus to infect a non dividing cell. This ability to enter the nucleus is specific of lentiviruses, other retroviruses cannot and rely on cell division to access cell chromosomes. In the third step, termed strand transfer, the integrase protein joins the previously processed 3' ends to the 5' ends of strands of target cellular DNA at the site of integration. The 5'-ends are produced by integrase-catalyzed staggered cuts, 5 bp apart. A Y-shaped, gapped, recombination intermediate results, with the 5'-ends of the viral DNA strands and the 3' ends of target DNA strands remaining unjoined, flanking a gap of 5 bp. The last step is viral DNA integration into host chromosome. This involves host DNA repair synthesis in which the 5 bp gaps between the unjoined strands are filled in and then ligated. Since this process occurs at both cuts flanking the HIV genome, a 5 bp duplication of host DNA is produced at the ends of HIV-1 integration. Alternatively, Integrase may catalyze the excision of viral DNA just after strand transfer, this is termed disintegration. This Homo sapiens (Human) protein is Gag-Pol polyprotein (gag-pol).